The following is a 1007-amino-acid chain: MDDPLKPKPVPLAAETVLWFEFLLDPHKITQHLQRPHPEPSAMELIVQFISMTPNTAQESVGTPGSDLQNLNQTPSNSGPIPGVVGGAPAPTTPTASGGVGMPHSPQRPAEKGLQLNRKQLALKILELKVATWLKWDLDALEKNLPVIMQLALLRDLCTISYGCSLSIPLPNDFDARISAAGNERAARFALTIYHRMLLRMQLIKEQALKAPRPQNTMYQTVDQLQQFLDTPTQPSIEYLQQLCASTKPFYIFHYDSFVPLRCDDIGNGQNYDVMHLITPQELRAQLHYELAQYYLYTKQYVLAREAAAACNTNLQAIPPQTTLYYCHIRPSELEGLLQACGISAEEQSLLEKFQQSLLNNYTDIVSILRMDNRRREIPFISRRQVELDIEGSISTGILKETVQLQLQVAALNVVRNIFEWGSIFGSVEYFEKYRELDCLPPLVEALQEMLPHCTFKEQAALKHFLIDCLLHQGGQSRQLLQTVRGFGLFSSDELQDIDEQMLQATPPVPTNSLASLSDWMCHSKMSRVDVGALERQLISCTNANTVRILLVKLCATAPGKPLWAINPSWDVPQPLKTLIMAMPVSFLQDFSYVLLGKARELATRGNYIDAVSMLSVLKSENQRQEMAANVQLMCKLITWEILHIQITQCLEEWHQKPLDLQSLGGRCKQCLGALQAGDSIVPRPDILESCAIMLLNLTEFPPLLYLDKRAGPLELPLAFAATFIEMEKMKGPKKVCRDAWELMLSMFLNVPKRGSSGVGGISSLQAFLQRIRHQSVFGLAISMIGKVHNILKDDPNHDLSCEYMQLWPTSINNPVSYSLRSVCETLQWLLSEALSYYPQTISWLKMKGDLDLAIGNNESAMRCYVNALVTGTDYCTMPLQRNVADDYVIRKMIRCAANLGCHMQATVLCQFLDEIDYGIVFKNLSEKSSNFTDAMDAYYSCIWDTTLLEFIVNLHAKRGEHSRKLEAISMMGTLELNANNNEEIKRESAMVRKSRFLRALAKQYLL.

Residues 19 to 24 (WFEFLL) carry the WFEF motif motif. Over residues 56-78 (TAQESVGTPGSDLQNLNQTPSNS) the composition is skewed to polar residues. Positions 56-112 (TAQESVGTPGSDLQNLNQTPSNSGPIPGVVGGAPAPTTPTASGGVGMPHSPQRPAEK) are disordered. A compositionally biased stretch (low complexity) spans 79-97 (GPIPGVVGGAPAPTTPTAS).

Belongs to the Integrator subunit 8 family. As to quaternary structure, belongs to the multiprotein complex Integrator, at least composed of IntS1, IntS2, IntS3, IntS4, omd/IntS5, IntS6, defl/IntS7, IntS8, IntS9, IntS10, IntS11, IntS12, asun/IntS13, IntS14 and IntS15. The core complex associates with protein phosphatase 2A subunits mts/PP2A and Pp2A-29B, to form the Integrator-PP2A (INTAC) complex.

The protein localises to the nucleus. It is found in the chromosome. Its function is as follows. Component of the integrator complex, a multiprotein complex that terminates RNA polymerase II (Pol II) transcription in the promoter-proximal region of genes. The integrator complex provides a quality checkpoint during transcription elongation by driving premature transcription termination of transcripts that are unfavorably configured for transcriptional elongation: the complex terminates transcription by (1) catalyzing dephosphorylation of the C-terminal domain (CTD) of Pol II subunit Polr2A/Rbp1 and Spt5, and (2) degrading the exiting nascent RNA transcript via endonuclease activity. The integrator complex is also involved in the 3'-end processing of the U7 snRNA, and also the spliceosomal snRNAs U1, U2, U4 and U5. Within the integrator complex, INTS8 is required for the recruitment of protein phosphatase 2A (PP2A) to transcription pause-release checkpoint. This chain is Integrator complex subunit 8, found in Drosophila melanogaster (Fruit fly).